A 274-amino-acid chain; its full sequence is Non-structural protein 4 (274 aa).

The protein belongs to the aquareoviridae NS4 protein family.

The protein is Non-structural protein 4 (S7) of Notemigonus crysoleucas (Golden shiner).